Reading from the N-terminus, the 224-residue chain is Retinoschisin (224 aa).

Residues 1 to 23 (MPHKIEGFFLLLLFGYEATLGLS) form the signal peptide. An F5/8 type C domain is found at 63–219 (CPYHKPLGFE…IAIRMELLEC (157 aa)). Cystine bridges form between Cys63–Cys219 and Cys110–Cys142.

Homooctamer of 4 homodimers; disulfide-linked. The homooctamer has a flat, cogwheel structure with a diameter of about 14 nm. Two stacked octamers can assemble to form a hexadecamer. In terms of tissue distribution, detected in the eye cup. Detected in retina, in the inner segment of the photoreceptors, the inner nuclear layer, the inner plexiform layer and the ganglion cell layer (at protein level). Restricted to the retina. At the mRNA level, detected only within the photoreceptor cell layer, most prominently within the inner segments of the photoreceptors. Undetectable in the inner plexiform layers and the inner nuclear layer.

It localises to the secreted. The protein localises to the cell membrane. Functionally, binds negatively charged membrane lipids, such as phosphatidylserine and phosphoinositides. May play a role in cell-cell adhesion processes in the retina, via homomeric interaction between octamers present on the surface of two neighboring cells. Required for normal structure and function of the retina. In Mus musculus (Mouse), this protein is Retinoschisin (Rs1).